A 152-amino-acid polypeptide reads, in one-letter code: Ribosome maturation factor RimP (152 aa).

It belongs to the RimP family.

The protein resides in the cytoplasm. Functionally, required for maturation of 30S ribosomal subunits. The sequence is that of Ribosome maturation factor RimP from Salmonella arizonae (strain ATCC BAA-731 / CDC346-86 / RSK2980).